We begin with the raw amino-acid sequence, 521 residues long: Calcium-dependent protein kinase 33 (521 aa).

Glycine 2 carries the N-myristoyl glycine lipid modification. The tract at residues 15–56 is disordered; that stretch reads PQQNGERSVEIENRRRSTHQDPSKISTGTNQPPPWRNPAKHS. Over residues 21 to 36 the composition is skewed to basic and acidic residues; that stretch reads RSVEIENRRRSTHQDP. The 259-residue stretch at 73 to 331 folds into the Protein kinase domain; sequence YTLSKELGRG…AAEVLKHPWL (259 aa). ATP contacts are provided by residues 79 to 87 and lysine 102; that span reads LGRGQFGVT. Aspartate 197 functions as the Proton acceptor in the catalytic mechanism. Serine 237 is modified (phosphoserine). Residues 337-367 are autoinhibitory domain; the sequence is ASDKPIDSAVLSRMKQFRAMNKLKKLALKVI. EF-hand domains follow at residues 374–409, 410–445, 446–481, and 482–516; these read EEIQGLKAMFANIDTDNSGTITYEELKEGLAKLGSR, LTEAEVKQLMDAADVDGNGSIDYIEFITATMHRHRL, ESNENVYKAFQHFDKDGSGYITTDELEAALKEYGMG, and DDATIKEILSDVDADNDGRINYDEFCAMMRSGNPQ. Aspartate 387, aspartate 389, serine 391, threonine 393, glutamate 398, aspartate 423, aspartate 425, asparagine 427, serine 429, glutamate 434, aspartate 459, aspartate 461, serine 463, tyrosine 465, glutamate 470, aspartate 494, aspartate 496, aspartate 498, arginine 500, and glutamate 505 together coordinate Ca(2+).

It belongs to the protein kinase superfamily. Ser/Thr protein kinase family. CDPK subfamily. In terms of assembly, interacts with THI1. Interacts with FD and FDP. Post-translationally, autophosphorylated. As to expression, expressed in primary roots, leaves, inflorescences, siliques and guard cells. Expressed in the shoot apical meristem.

Its subcellular location is the cell membrane. The protein resides in the nucleus. It localises to the cytoplasm. It catalyses the reaction L-seryl-[protein] + ATP = O-phospho-L-seryl-[protein] + ADP + H(+). It carries out the reaction L-threonyl-[protein] + ATP = O-phospho-L-threonyl-[protein] + ADP + H(+). With respect to regulation, activated by calcium. Autophosphorylation may play an important role in the regulation of the kinase activity. Repressed by THI1 through a negative regulation of the autophosphorylation activity in the presence of Ca(2+). Functionally, ca(2+)-dependent protein kinase. Negative regulator of stomatal closure and slow anion currents. Unable to phosphorylate THI1 in vitro, but the kinase activity is essential for the stomatal closure regulation. Phosphorylates FD. May play a role in signal transduction pathways that involve calcium as a second messenger. The sequence is that of Calcium-dependent protein kinase 33 from Arabidopsis thaliana (Mouse-ear cress).